The sequence spans 335 residues: DNA-directed RNA polymerase subunit alpha (335 aa).

An alpha N-terminal domain (alpha-NTD) region spans residues 1-233; the sequence is MTRTANEFLT…QQIAIFVDLQ (233 aa). Positions 247-335 are alpha C-terminal domain (alpha-CTD); sequence VDPILLRPVD…MDDRFAYRSR (89 aa).

Belongs to the RNA polymerase alpha chain family. As to quaternary structure, homodimer. The RNAP catalytic core consists of 2 alpha, 1 beta, 1 beta' and 1 omega subunit. When a sigma factor is associated with the core the holoenzyme is formed, which can initiate transcription.

The enzyme catalyses RNA(n) + a ribonucleoside 5'-triphosphate = RNA(n+1) + diphosphate. In terms of biological role, DNA-dependent RNA polymerase catalyzes the transcription of DNA into RNA using the four ribonucleoside triphosphates as substrates. In Acinetobacter baumannii (strain AB307-0294), this protein is DNA-directed RNA polymerase subunit alpha.